Consider the following 104-residue polypeptide: Type IV secretion system protein PtlB homolog (104 aa).

The helical transmembrane segment at 30-50 (IALLGIWFSIAFLALFPVALL) threads the bilayer.

It belongs to the virB3 family.

It is found in the cell membrane. This Bordetella bronchiseptica (strain ATCC BAA-588 / NCTC 13252 / RB50) (Alcaligenes bronchisepticus) protein is Type IV secretion system protein PtlB homolog (ptlB).